Reading from the N-terminus, the 225-residue chain is Glutathione S-transferase Mu 3 (225 aa).

Residues 5–92 form the GST N-terminal domain; that stretch reads SSMVLGYWDI…YIARKHNMCG (88 aa). Glutathione contacts are provided by residues 11 to 12, 50 to 54, and 63 to 64; these read YW, WLDVK, and NL. K54 is covalently cross-linked (Glycyl lysine isopeptide (Lys-Gly) (interchain with G-Cter in SUMO2)). K73 participates in a covalent cross-link: Glycyl lysine isopeptide (Lys-Gly) (interchain with G-Cter in SUMO2). 76–77 lines the glutathione pocket; that stretch reads QS. One can recognise a GST C-terminal domain in the interval 94–212; sequence TEEEKIRVDI…QSDQFFKMPI (119 aa). Residue Y120 coordinates substrate.

It belongs to the GST superfamily. Mu family. As to quaternary structure, homodimer.

It localises to the cytoplasm. The catalysed reaction is RX + glutathione = an S-substituted glutathione + a halide anion + H(+). Its function is as follows. Conjugation of reduced glutathione to a wide number of exogenous and endogenous hydrophobic electrophiles. May govern uptake and detoxification of both endogenous compounds and xenobiotics at the testis and brain blood barriers. This is Glutathione S-transferase Mu 3 (GSTM3) from Macaca fuscata fuscata (Japanese macaque).